The following is a 412-amino-acid chain: LL-diaminopimelate aminotransferase (412 aa).

Substrate is bound by residues Y15 and G42. Pyridoxal 5'-phosphate contacts are provided by residues Y72, S108 to K109, Y132, N187, Y218, and S246 to S248. Residues K109, Y132, and N187 each coordinate substrate. K249 carries the post-translational modification N6-(pyridoxal phosphate)lysine. The pyridoxal 5'-phosphate site is built by R257 and N292. Positions 292 and 388 each coordinate substrate.

The protein belongs to the class-I pyridoxal-phosphate-dependent aminotransferase family. LL-diaminopimelate aminotransferase subfamily. In terms of assembly, homodimer. It depends on pyridoxal 5'-phosphate as a cofactor.

The catalysed reaction is (2S,6S)-2,6-diaminopimelate + 2-oxoglutarate = (S)-2,3,4,5-tetrahydrodipicolinate + L-glutamate + H2O + H(+). Its pathway is amino-acid biosynthesis; L-lysine biosynthesis via DAP pathway; LL-2,6-diaminopimelate from (S)-tetrahydrodipicolinate (aminotransferase route): step 1/1. Its function is as follows. Involved in the synthesis of meso-diaminopimelate (m-DAP or DL-DAP), required for both lysine and peptidoglycan biosynthesis. Catalyzes the direct conversion of tetrahydrodipicolinate to LL-diaminopimelate. The sequence is that of LL-diaminopimelate aminotransferase from Synechocystis sp. (strain ATCC 27184 / PCC 6803 / Kazusa).